The following is a 624-amino-acid chain: Kelch-like protein diablo (624 aa).

Low complexity predominate over residues 1 to 21 (MGDPLLPGSTGLGSGPAAAAT). Residues 1–55 (MGDPLLPGSTGLGSGPAAAATGGSGTTGTGLGSGGTSGAERPPSPARLTHTSEKH) are disordered. Over residues 22 to 37 (GGSGTTGTGLGSGGTS) the composition is skewed to gly residues. Residues 73–140 (CDVVLNVGGR…CYTAHIIVEE (68 aa)) enclose the BTB domain. Residues 175-277 (CLGIRAFADT…SPKFLVGTVG (103 aa)) form the BACK domain. Kelch repeat units follow at residues 324 to 370 (VLFA…VLND), 372 to 418 (LYAV…VLDG), 419 to 465 (FLYA…VLSG), 467 to 512 (LYAI…VFNN), 514 to 559 (IYAV…VVNG), and 560 to 606 (QLYA…VMRA).

The protein operates within protein modification; protein ubiquitination. Probable substrate-specific adapter of an E3 ubiquitin-protein ligase complex which mediates the ubiquitination and subsequent proteasomal degradation of target proteins. May have a role in synapse differentiation and growth. This Drosophila virilis (Fruit fly) protein is Kelch-like protein diablo.